A 272-amino-acid polypeptide reads, in one-letter code: HMP-PP phosphatase (272 aa).

Residue Asp-8 is the Nucleophile of the active site. Residues Asp-8, Asp-10, and Asp-212 each coordinate Mg(2+).

Belongs to the HAD-like hydrolase superfamily. Cof family. Mg(2+) serves as cofactor.

The enzyme catalyses 4-amino-2-methyl-5-(diphosphooxymethyl)pyrimidine + H2O = 4-amino-2-methyl-5-(phosphooxymethyl)pyrimidine + phosphate + H(+). Catalyzes the hydrolysis of 4-amino-2-methyl-5-hydroxymethylpyrimidine pyrophosphate (HMP-PP) to 4-amino-2-methyl-5-hydroxymethylpyrimidine phosphate (HMP-P). The sequence is that of HMP-PP phosphatase from Enterobacter sp. (strain 638).